Here is a 641-residue protein sequence, read N- to C-terminus: Choline O-acetyltransferase (641 aa).

The interval M1–V29 is disordered. S17 is subject to Phosphoserine. The active-site Proton acceptor is the H335. Position 366 is a phosphoserine (S366). CoA contacts are provided by residues G413–D425, S451, and Q552. Positions Q619–P641 are disordered.

This sequence belongs to the carnitine/choline acetyltransferase family.

The catalysed reaction is choline + acetyl-CoA = acetylcholine + CoA. Functionally, catalyzes the reversible synthesis of acetylcholine (ACh) from acetyl CoA and choline at cholinergic synapses. The protein is Choline O-acetyltransferase (CHAT) of Sus scrofa (Pig).